Reading from the N-terminus, the 214-residue chain is Calcineurin B-like protein 8 (214 aa).

4 EF-hand domains span residues 35 to 70 (EIEA…RNGS), 71 to 106 (MQNL…FHPY), 108 to 143 (PEHE…LLGE), and 152 to 187 (SIEA…NPSI). Residues aspartate 165, asparagine 167, aspartate 169, lysine 171, and glutamate 176 each coordinate Ca(2+). Serine 205 carries the post-translational modification Phosphoserine.

The protein belongs to the calcineurin regulatory subunit family. As to quaternary structure, interacts with CIPK23. Interacts with CIPK14 at the cell membrane exclusively.

The protein resides in the cytoplasm. It is found in the nucleus. It localises to the cell membrane. In terms of biological role, acts as a calcium sensor. CBL proteins interact with CIPK serine-threonine protein kinases. Binding of a CBL protein to the regulatory NAF domain of a CIPK protein lead to the activation of the kinase in a calcium-dependent manner. This chain is Calcineurin B-like protein 8 (CBL8), found in Arabidopsis thaliana (Mouse-ear cress).